A 132-amino-acid polypeptide reads, in one-letter code: Small ribosomal subunit protein uS8c (132 aa).

It belongs to the universal ribosomal protein uS8 family. Part of the 30S ribosomal subunit.

It localises to the plastid. The protein localises to the chloroplast. Its function is as follows. One of the primary rRNA binding proteins, it binds directly to 16S rRNA central domain where it helps coordinate assembly of the platform of the 30S subunit. The polypeptide is Small ribosomal subunit protein uS8c (rps8) (Calycanthus floridus var. glaucus (Eastern sweetshrub)).